The following is a 353-amino-acid chain: Probable peptide ABC transporter ATP-binding protein y4tS (353 aa).

One can recognise an ABC transporter domain in the interval 6–256 (LKVESLTKHY…PVHPYTEALI (251 aa)). ATP is bound at residue 49–56 (GESGCGKS).

The protein belongs to the ABC transporter superfamily.

Its subcellular location is the cell inner membrane. Functionally, probably part of a binding-protein-dependent transport system y4tOPQRS for a peptide. Probably responsible for energy coupling to the transport system. The polypeptide is Probable peptide ABC transporter ATP-binding protein y4tS (Sinorhizobium fredii (strain NBRC 101917 / NGR234)).